The sequence spans 98 residues: NADH-ubiquinone oxidoreductase chain 4L (98 aa).

Helical transmembrane passes span 1–21, 29–49, and 61–81; these read MSMV…GLLM, SLLC…MVVL, and IILL…LVMV.

Belongs to the complex I subunit 4L family. Core subunit of respiratory chain NADH dehydrogenase (Complex I) which is composed of 45 different subunits.

The protein resides in the mitochondrion inner membrane. The enzyme catalyses a ubiquinone + NADH + 5 H(+)(in) = a ubiquinol + NAD(+) + 4 H(+)(out). Its function is as follows. Core subunit of the mitochondrial membrane respiratory chain NADH dehydrogenase (Complex I) which catalyzes electron transfer from NADH through the respiratory chain, using ubiquinone as an electron acceptor. Part of the enzyme membrane arm which is embedded in the lipid bilayer and involved in proton translocation. This chain is NADH-ubiquinone oxidoreductase chain 4L (MT-ND4L), found in Acinonyx jubatus (Cheetah).